The following is a 364-amino-acid chain: Peptide chain release factor 2 (364 aa).

Gln-251 bears the N5-methylglutamine mark.

The protein belongs to the prokaryotic/mitochondrial release factor family. In terms of processing, methylated by PrmC. Methylation increases the termination efficiency of RF2.

The protein resides in the cytoplasm. In terms of biological role, peptide chain release factor 2 directs the termination of translation in response to the peptide chain termination codons UGA and UAA. The sequence is that of Peptide chain release factor 2 from Sulfurovum sp. (strain NBC37-1).